A 326-amino-acid polypeptide reads, in one-letter code: Light-induced protein, chloroplastic (326 aa).

Residues 1 to 63 (MASISSLNQI…TNPKPKFTAQ (63 aa)) constitute a chloroplast transit peptide.

It belongs to the LIPC family. In terms of assembly, associates with the major light-harvesting antenna complex polypeptides of the PSII oxygen-evolving complex. As to expression, expressed at high levels in leaves and in the petals and anthers of flowers.

It localises to the plastid. Its subcellular location is the chloroplast thylakoid membrane. Its function is as follows. Required for normal plant growth. May be both photoprotective and play an ancillary role in photosynthesis. May structurally stabilize thylakoids during osmotic and oxidative stress. This is Light-induced protein, chloroplastic from Solanum demissum (Wild potato).